A 594-amino-acid chain; its full sequence is Invasin CotH2 (594 aa).

Residues 1–19 (MKLSLTIVSSSFLVAIAHA) form the signal peptide. Asparagine 77, asparagine 162, asparagine 226, asparagine 316, asparagine 441, asparagine 519, and asparagine 533 each carry an N-linked (GlcNAc...) asparagine glycan. Residues 529-565 (PPAANGTATSTNDGGNTHTAAGESKPASSSESSGSKI) are disordered. Over residues 534–547 (GTATSTNDGGNTHT) the composition is skewed to polar residues. Residues 548–565 (AAGESKPASSSESSGSKI) are compositionally biased toward low complexity. Serine 571 carries the GPI-anchor amidated serine lipid modification. A propeptide spans 572–594 (GASRSAVSTVLLGVTALVATAIF) (removed in mature form).

In terms of assembly, interacts with host epithelial cell surface HSPA5/BiP protein.

It localises to the cell membrane. Promotes invasion of host epithelial cells by adhering to receptors on the host cell surface to facilitate endocytosis of the pathogen into host cells. Binds HSPA5/BiP protein on the cell surface of host epithelial cells. This Rhizopus delemar (strain RA 99-880 / ATCC MYA-4621 / FGSC 9543 / NRRL 43880) (Mucormycosis agent) protein is Invasin CotH2.